The chain runs to 465 residues: Clusterin-like protein 1 (465 aa).

An N-terminal signal peptide occupies residues 1-20 (MKPPILVFIVYLLQLRDCQC). The stretch at 62-107 (LMERREEEHSKLMRTLKKCREEKQEALKLMNEVQEHLEEEERLCQV) forms a coiled coil. Intrachain disulfides connect Cys-105-Cys-333, Cys-116-Cys-325, Cys-119-Cys-322, Cys-124-Cys-315, and Cys-131-Cys-305. Asn-196 and Asn-257 each carry an N-linked (GlcNAc...) asparagine glycan. A disordered region spans residues 280–300 (LSKQDKDSAHGGPSSTTWPVR). N-linked (GlcNAc...) asparagine glycosylation is found at Asn-311, Asn-351, Asn-412, and Asn-430.

Belongs to the clusterin family.

The protein localises to the secreted. This is Clusterin-like protein 1 from Bos taurus (Bovine).